The primary structure comprises 294 residues: Fructose-bisphosphate aldolase class 1 (294 aa).

Catalysis depends on Glu-176, which acts as the Proton acceptor. Lys-213 (schiff-base intermediate with dihydroxyacetone-P) is an active-site residue.

It belongs to the class I fructose-bisphosphate aldolase family.

The enzyme catalyses beta-D-fructose 1,6-bisphosphate = D-glyceraldehyde 3-phosphate + dihydroxyacetone phosphate. The protein operates within carbohydrate degradation; glycolysis; D-glyceraldehyde 3-phosphate and glycerone phosphate from D-glucose: step 4/4. This is Fructose-bisphosphate aldolase class 1 from Oceanobacillus iheyensis (strain DSM 14371 / CIP 107618 / JCM 11309 / KCTC 3954 / HTE831).